Here is a 162-residue protein sequence, read N- to C-terminus: Endoribonuclease YbeY (162 aa).

3 residues coordinate Zn(2+): His-117, His-121, and His-127.

It belongs to the endoribonuclease YbeY family. Requires Zn(2+) as cofactor.

The protein resides in the cytoplasm. Single strand-specific metallo-endoribonuclease involved in late-stage 70S ribosome quality control and in maturation of the 3' terminus of the 16S rRNA. This Francisella tularensis subsp. mediasiatica (strain FSC147) protein is Endoribonuclease YbeY.